Here is a 185-residue protein sequence, read N- to C-terminus: Serine/arginine-rich splicing factor RSZ21 (185 aa).

One can recognise an RRM domain in the interval 2–73; that stretch reads ARLYVGNLDP…WRVELSRNSS (72 aa). The segment at 86–103 adopts a CCHC-type zinc-finger fold; the sequence is MKCYECGETGHFARECRL. The interval 104–185 is disordered; the sequence is RIGPGGLGSG…DGGRYRRSRS (82 aa). Positions 113-123 are enriched in basic residues; sequence GKRRSRSRSRS. Composition is skewed to low complexity over residues 124–138 and 151–162; these read RSPQYRKSPTYGRRS and VSPVRGRSYSRS.

The protein belongs to the splicing factor SR family. Post-translationally, extensively phosphorylated on serine residues in the RS domain. As to expression, expressed in roots, leaves and immature seeds.

Its subcellular location is the nucleus. Functionally, involved in pre-mRNA splicing. The chain is Serine/arginine-rich splicing factor RSZ21 (RSZP21) from Oryza sativa subsp. japonica (Rice).